Here is a 325-residue protein sequence, read N- to C-terminus: Cell division protein ZipA (325 aa).

At 1–5 the chain is on the periplasmic side; the sequence is MQELR. A helical membrane pass occupies residues 6-26; sequence LVLILVGALAIAALLFHGLWT. At 27-325 the chain is on the cytoplasmic side; it reads SRKETSSKFG…KQRVKVFCRK (299 aa).

This sequence belongs to the ZipA family. As to quaternary structure, interacts with FtsZ via their C-terminal domains.

It localises to the cell inner membrane. Essential cell division protein that stabilizes the FtsZ protofilaments by cross-linking them and that serves as a cytoplasmic membrane anchor for the Z ring. Also required for the recruitment to the septal ring of downstream cell division proteins. The protein is Cell division protein ZipA of Aliivibrio fischeri (strain MJ11) (Vibrio fischeri).